A 329-amino-acid polypeptide reads, in one-letter code: Biotin synthase (329 aa).

Positions 38–262 (NTIQVSTLLS…IMPHSYIRLS (225 aa)) constitute a Radical SAM core domain. The [4Fe-4S] cluster site is built by Cys-53, Cys-57, and Cys-60. Residues Cys-97, Cys-128, Cys-188, and Arg-260 each coordinate [2Fe-2S] cluster.

Belongs to the radical SAM superfamily. Biotin synthase family. As to quaternary structure, homodimer. [4Fe-4S] cluster serves as cofactor. The cofactor is [2Fe-2S] cluster.

It carries out the reaction (4R,5S)-dethiobiotin + (sulfur carrier)-SH + 2 reduced [2Fe-2S]-[ferredoxin] + 2 S-adenosyl-L-methionine = (sulfur carrier)-H + biotin + 2 5'-deoxyadenosine + 2 L-methionine + 2 oxidized [2Fe-2S]-[ferredoxin]. It participates in cofactor biosynthesis; biotin biosynthesis; biotin from 7,8-diaminononanoate: step 2/2. Functionally, catalyzes the conversion of dethiobiotin (DTB) to biotin by the insertion of a sulfur atom into dethiobiotin via a radical-based mechanism. The polypeptide is Biotin synthase (Acinetobacter baumannii (strain ACICU)).